The primary structure comprises 386 residues: 1-deoxy-D-xylulose 5-phosphate reductoisomerase (386 aa).

NADPH-binding residues include T7, G8, S9, I10, A33, and N124. K125 contributes to the 1-deoxy-D-xylulose 5-phosphate binding site. E126 contributes to the NADPH binding site. Mn(2+) is bound at residue D148. The 1-deoxy-D-xylulose 5-phosphate site is built by S149, E150, S174, and H197. Residue E150 participates in Mn(2+) binding. G203 contacts NADPH. 1-deoxy-D-xylulose 5-phosphate-binding residues include S210, N215, K216, and E219. E219 is a Mn(2+) binding site.

It belongs to the DXR family. Requires Mg(2+) as cofactor. Mn(2+) serves as cofactor.

The catalysed reaction is 2-C-methyl-D-erythritol 4-phosphate + NADP(+) = 1-deoxy-D-xylulose 5-phosphate + NADPH + H(+). It functions in the pathway isoprenoid biosynthesis; isopentenyl diphosphate biosynthesis via DXP pathway; isopentenyl diphosphate from 1-deoxy-D-xylulose 5-phosphate: step 1/6. Catalyzes the NADPH-dependent rearrangement and reduction of 1-deoxy-D-xylulose-5-phosphate (DXP) to 2-C-methyl-D-erythritol 4-phosphate (MEP). This chain is 1-deoxy-D-xylulose 5-phosphate reductoisomerase, found in Kitasatospora griseola (Streptomyces griseolosporeus).